Reading from the N-terminus, the 529-residue chain is Cytochrome P450 monooxygenase atmQ (529 aa).

A run of 2 helical transmembrane segments spans residues 22-42 and 51-71; these read YPFA…QQLA and SWVN…IAAF. Position 467 (Cys467) interacts with heme.

This sequence belongs to the cytochrome P450 family. The cofactor is heme.

The protein resides in the membrane. The protein operates within secondary metabolite biosynthesis. Cytochrome P450 monooxygenase; part of the ATM2 gene cluster that mediates the biosynthesis of aflatrem, a tremorgenic mycotoxin with acute neurotoxic effects. Synthesis of geranylgeranyl diphosphate (GGPP) by AtmG (a GGPP synthase) precedes condensation of GGPP with indole 3-glycerol phosphate, followed by epoxidation and cyclization by AtmM (a FAD-dependent monooxygenase) and AtmC (a prenyltransferase) to produce paspaline. AtmB is also essential for paspaline production, but its exact role has not been identified yet. AtmP, a cytochrome P450 monooxygenase, subsequently converts paspaline to 13-desoxypaxilline via PC-M6 by removal of the C-30 methyl group and oxidation at C-10. AtmQ, a cytochrome P450 monooxygenase, then catalyzes the oxidation of 13-desoxypaxilline, first at C-7 to produce paspalicine and then at C-13 to form paspalinine. Finally, AtmD prenylates paspalinine to form aflatrem. The sequence is that of Cytochrome P450 monooxygenase atmQ from Aspergillus flavus.